The primary structure comprises 448 residues: Cysteine--tRNA ligase (448 aa).

Zn(2+) is bound at residue Cys-27. A 'HIGH' region motif is present at residues 29–39; it reads PTVYNYIHVGN. Residues Cys-210, His-235, and Glu-239 each contribute to the Zn(2+) site. The 'KMSKS' region signature appears at 267–271; sequence KMSKS. Lys-270 contacts ATP.

The protein belongs to the class-I aminoacyl-tRNA synthetase family. As to quaternary structure, monomer. Zn(2+) serves as cofactor.

It is found in the cytoplasm. It carries out the reaction tRNA(Cys) + L-cysteine + ATP = L-cysteinyl-tRNA(Cys) + AMP + diphosphate. The protein is Cysteine--tRNA ligase of Lactococcus lactis subsp. cremoris (strain SK11).